A 730-amino-acid chain; its full sequence is uncharacterized protein (730 aa).

Over residues phenylalanine 615 to aspartate 625 the composition is skewed to basic and acidic residues. 2 disordered regions span residues phenylalanine 615–serine 667 and lysine 684–isoleucine 730. Low complexity-rich tracts occupy residues serine 653–serine 667 and lysine 684–serine 701. A compositionally biased stretch (basic residues) spans lysine 713–serine 723.

This is an uncharacterized protein from Saccharomyces cerevisiae (strain ATCC 204508 / S288c) (Baker's yeast).